Reading from the N-terminus, the 129-residue chain is UPF0344 protein SSP1805 (129 aa).

4 helical membrane-spanning segments follow: residues 1–21, 36–56, 68–88, and 100–120; these read MLHMHIASWVLLIILFFAAYF, IHMLLRLFMLLVLISGFWVWI, MLLTLKMICGVAVVALMEVTI, and LMWTTIVVIILTMIIGIILPM.

This sequence belongs to the UPF0344 family.

The protein resides in the cell membrane. The protein is UPF0344 protein SSP1805 of Staphylococcus saprophyticus subsp. saprophyticus (strain ATCC 15305 / DSM 20229 / NCIMB 8711 / NCTC 7292 / S-41).